The sequence spans 164 residues: uncharacterized protein (164 aa).

The region spanning 28 to 157 (EAEILYQLQG…LIDVLARMRN (130 aa)) is the HTH marR-type domain. Residues 71–94 (QSDLQKKVNIDSAAVTRHLKQLES) constitute a DNA-binding region (H-T-H motif).

This is an uncharacterized protein from Bacillus subtilis (strain 168).